Here is a 243-residue protein sequence, read N- to C-terminus: Pyridoxine 5'-phosphate synthase (243 aa).

N7 serves as a coordination point for 3-amino-2-oxopropyl phosphate. 9–10 (DH) contacts 1-deoxy-D-xylulose 5-phosphate. A 3-amino-2-oxopropyl phosphate-binding site is contributed by R18. The active-site Proton acceptor is H43. 1-deoxy-D-xylulose 5-phosphate contacts are provided by R45 and H50. The active-site Proton acceptor is the E70. T100 contacts 1-deoxy-D-xylulose 5-phosphate. H192 serves as the catalytic Proton donor. 3-amino-2-oxopropyl phosphate contacts are provided by residues G193 and 215–216 (GF).

It belongs to the PNP synthase family. Homooctamer; tetramer of dimers.

It is found in the cytoplasm. It catalyses the reaction 3-amino-2-oxopropyl phosphate + 1-deoxy-D-xylulose 5-phosphate = pyridoxine 5'-phosphate + phosphate + 2 H2O + H(+). It functions in the pathway cofactor biosynthesis; pyridoxine 5'-phosphate biosynthesis; pyridoxine 5'-phosphate from D-erythrose 4-phosphate: step 5/5. Its function is as follows. Catalyzes the complicated ring closure reaction between the two acyclic compounds 1-deoxy-D-xylulose-5-phosphate (DXP) and 3-amino-2-oxopropyl phosphate (1-amino-acetone-3-phosphate or AAP) to form pyridoxine 5'-phosphate (PNP) and inorganic phosphate. The sequence is that of Pyridoxine 5'-phosphate synthase from Salinibacter ruber (strain DSM 13855 / M31).